The primary structure comprises 591 residues: L-fucose isomerase (591 aa).

Active-site proton acceptor residues include Glu-337 and Asp-361. Mn(2+) is bound by residues Glu-337, Asp-361, and His-528.

Belongs to the L-fucose isomerase family. As to quaternary structure, homohexamer. Mn(2+) is required as a cofactor.

The protein resides in the cytoplasm. It carries out the reaction L-fucose = L-fuculose. The enzyme catalyses D-arabinose = D-ribulose. It catalyses the reaction L-xylopyranose = L-xylulose. It participates in carbohydrate degradation; L-fucose degradation; L-lactaldehyde and glycerone phosphate from L-fucose: step 1/3. Its activity is regulated as follows. Inhibited by ribitol, L-arabitol and dulcitol. Isomerization of L-xylulose to L-xylose is inhibited by xylitol. Functionally, converts the aldose L-fucose into the corresponding ketose L-fuculose. Also converts D-arabinose into D-ribulose. In addition, catalyzes the isomerization of L-xylulose to L-xylose. This Escherichia coli (strain K12) protein is L-fucose isomerase.